A 214-amino-acid polypeptide reads, in one-letter code: Redox-sensing transcriptional repressor Rex (214 aa).

Positions 16–55 (LYYRYLIFLNDEGKEKVSSTELAEAVQVDSASIRRDFSYF) form a DNA-binding region, H-T-H motif. 90–95 (GVGNMG) is a binding site for NAD(+).

Belongs to the transcriptional regulatory Rex family. In terms of assembly, homodimer.

The protein resides in the cytoplasm. Its function is as follows. Modulates transcription in response to changes in cellular NADH/NAD(+) redox state. The sequence is that of Redox-sensing transcriptional repressor Rex from Lactobacillus gasseri (strain ATCC 33323 / DSM 20243 / BCRC 14619 / CIP 102991 / JCM 1131 / KCTC 3163 / NCIMB 11718 / NCTC 13722 / AM63).